The chain runs to 215 residues: Glutathione S-transferase stcT (215 aa).

The GST N-terminal domain maps to 2 to 82 (PFGTLYTRPF…YDSNTTLLGT (81 aa)). Lysine 52 and glutamate 66 together coordinate glutathione. Lysine 52 lines the substrate pocket. In terms of domain architecture, GST C-terminal spans 83–211 (TGQEYASIIR…PVLAEYEMPI (129 aa)).

This sequence belongs to the GST superfamily. Glutathione is required as a cofactor.

The protein operates within mycotoxin biosynthesis; sterigmatocystin biosynthesis. Glutathione S-transferase; part of the gene cluster that mediates the biosynthesis of sterigmatocystin (ST), a polyketide-derived furanocoumarin which is part of the most toxic and carcinogenic compounds among the known mycotoxins. The first step in the biosynthesis of sterigmatocystin is the production of hexanoate by the fatty acid synthase (FAS) units stcJ and stcK. The polyketide backbone is assembled by the non-reducing polyketide synthase stcA by condensation of the starter hexanoyl-CoA and 7 malonyl-CoA extender units followed by cyclization and release of norsolorinic acid. Norsolorinic acid is the first stable intermediate in the biosynthesis of sterigmatocystin and is converted into averantin (AVN) by the ketoreductase stcE which reduces the hexanoate ketone to an alcohol. Averantin is then oxidized into 5'-hydroxyaverantin (HAVN) by the cytochrome P450 monooxygenase stcF. 5'-hydroxyaverantin is further converted to 5'-oxyaverantin (OAVN) by the 5'-hydroxyaverantin dehydrogenase stcG. The next step is the conversion of OAVN into averufin (AVF) which is catalyzed by a yet to be identified enzyme. The cytochrome P450 monooxygenase stcB and the flavin-binding monooxygenase stcW are both required for the conversion of averufin to 1-hydroxyversicolorone. The esterase stcI probably catalyzes the formation of versiconal hemiacetal acetate from 1-hydroxyversicolorone. The oxydoreductase stcN then probably catalyzes the biosynthetic step from versiconal to versicolorin B (VERB). The next step is performed by the versicolorin B desaturase stcL to produce versicolorin A (VERA). The ketoreductase stcU and the cytochrome P450 monooxygenase stcS are involved in the conversion of versicolorin A to demethylsterigmatocystin. The Baeyer-Villiger oxidas stcQ and the reductase stcR might be involved in the biosynthetic step from versicolorin A to demethylsterigmatocystin. The final step in the biosynthesis of sterigmatocystin is the methylation of demethylsterigmatocystin catalyzed by the methyltransferase stcP. The sequence is that of Glutathione S-transferase stcT from Emericella nidulans (strain FGSC A4 / ATCC 38163 / CBS 112.46 / NRRL 194 / M139) (Aspergillus nidulans).